The following is a 208-amino-acid chain: Regulator of Ty1 transposition protein 105 (208 aa).

Residues 28–105 form a disordered region; it reads GVSFDRSLTP…QRADQRSRLE (78 aa). The segment covering 33–42 has biased composition (polar residues); sequence RSLTPQSLRT. Positions 60–71 are enriched in low complexity; sequence IDTSPSVVSDII. The span at 94-105 shows a compositional bias: basic and acidic residues; the sequence is ERQRADQRSRLE.

It localises to the cytoplasm. It is found in the nucleus. Its function is as follows. Involved in regulation of Ty1 transposition. Inhibits Ty1 transposition at a post-transcriptional and pre-integrational stage of the Ty1 retrotransposition cycle. This Saccharomyces cerevisiae (strain YJM789) (Baker's yeast) protein is Regulator of Ty1 transposition protein 105 (RTT105).